The following is a 551-amino-acid chain: Xylulose kinase (551 aa).

Substrate is bound by residues His-114, Arg-185, Asp-295, and Asn-296. ATP is bound by residues Trp-370, 456 to 457 (GA), and Asn-460.

The protein belongs to the FGGY kinase family. As to quaternary structure, monomer.

It carries out the reaction D-xylulose + ATP = D-xylulose 5-phosphate + ADP + H(+). Its function is as follows. Phosphorylates D-xylulose to produce D-xylulose 5-phosphate, a molecule that may play an important role in the regulation of glucose metabolism and lipogenesis. This is Xylulose kinase (Xylb) from Mus musculus (Mouse).